The primary structure comprises 118 residues: NADH-ubiquinone oxidoreductase chain 3 (118 aa).

The next 3 helical transmembrane spans lie at 7-27 (IFIY…LPFL), 62-82 (LVSI…PWAV), and 87-107 (IDLF…IGFL).

Belongs to the complex I subunit 3 family.

Its subcellular location is the mitochondrion membrane. The enzyme catalyses a ubiquinone + NADH + 5 H(+)(in) = a ubiquinol + NAD(+) + 4 H(+)(out). Its function is as follows. Core subunit of the mitochondrial membrane respiratory chain NADH dehydrogenase (Complex I) that is believed to belong to the minimal assembly required for catalysis. Complex I functions in the transfer of electrons from NADH to the respiratory chain. The immediate electron acceptor for the enzyme is believed to be ubiquinone. The sequence is that of NADH-ubiquinone oxidoreductase chain 3 (ND3) from Allium cepa (Onion).